A 255-amino-acid chain; its full sequence is Folate receptor alpha (255 aa).

An N-terminal signal peptide occupies residues 1–24 (MAHLMTVQLLLLVMWMAECAQSRA). 8 cysteine pairs are disulfide-bonded: Cys35–Cys63, Cys55–Cys103, Cys64–Cys107, Cys87–Cys173, Cys94–Cys144, Cys133–Cys207, Cys137–Cys187, and Cys150–Cys167. A glycan (N-linked (GlcNAc...) asparagine) is linked at Asn67. Residues Asp101, Tyr105, 122-126 (WRKER), 155-160 (HKGWNW), and Ser194 each bind folate. Asn159 carries an N-linked (GlcNAc...) asparagine glycan. N-linked (GlcNAc...) asparagine glycosylation occurs at Asn199. A lipid anchor (GPI-anchor amidated serine) is attached at Ser232. Positions 233 to 255 (GAGFHGTWPLLCSLSLVLLWVIS) are cleaved as a propeptide — removed in mature form.

Belongs to the folate receptor family. Post-translationally, the secreted form is derived from the membrane-bound form either by cleavage of the GPI anchor, or/and by proteolysis catalyzed by a metalloprotease. In terms of tissue distribution, detected in kidney proximal tubules (at protein level).

It localises to the cell membrane. The protein resides in the apical cell membrane. Its subcellular location is the basolateral cell membrane. It is found in the secreted. The protein localises to the cytoplasmic vesicle. It localises to the clathrin-coated vesicle. The protein resides in the endosome. Functionally, binds to folate and reduced folic acid derivatives and mediates delivery of 5-methyltetrahydrofolate and folate analogs into the interior of cells. Has high affinity for folate and folic acid analogs at neutral pH. Exposure to slightly acidic pH after receptor endocytosis triggers a conformation change that strongly reduces its affinity for folates and mediates their release. Required for normal embryonic development and normal cell proliferation. Required for renal folate reabsorption. This chain is Folate receptor alpha (Folr1), found in Mus musculus (Mouse).